Consider the following 754-residue polypeptide: Polycomb protein mes-3 (754 aa).

The tract at residues 1–83 (MTPATAEVKV…PTKLENIQKT (83 aa)) is disordered. Residues 31 to 40 (ARREEEKENL) show a composition bias toward basic and acidic residues. A compositionally biased stretch (low complexity) spans 51–61 (SSEAGSSRESS).

Forms a heterotrimeric complex with the Polycomb proteins mes-2 and mes-3. Does not interact with mes-4. Interacts with nyfa-1. As to expression, in adults, it is predominantly expressed in the germline, and weakly expressed in intestinal cells.

Its subcellular location is the nucleus. In terms of biological role, component of a Polycomb group (PcG) complex. PcG proteins act by forming multiprotein complexes, which are required to maintain the transcriptionally repressive state of homeotic genes throughout development. In association with the nfya-1-NF-Y complex, may play a role in repressing the expression of the homeobox protein egl-5 in tissues such as the head. PcG proteins are not required to initiate repression, but to maintain it during later stages of development. The mes-2/mes-3/mes-6 complex may participate in the global inactivation of the X chromosomes in germline cells. The complex may act via methylation of histone H3 'Lys-27', rendering chromatin heritably changed in its expressibility. This complex is required to exclude mes-4 from the inactivated X-chromosomes in germline cells. This is Polycomb protein mes-3 from Caenorhabditis elegans.